Reading from the N-terminus, the 236-residue chain is 2-C-methyl-D-erythritol 4-phosphate cytidylyltransferase (236 aa).

This sequence belongs to the IspD/TarI cytidylyltransferase family. IspD subfamily.

The catalysed reaction is 2-C-methyl-D-erythritol 4-phosphate + CTP + H(+) = 4-CDP-2-C-methyl-D-erythritol + diphosphate. Its pathway is isoprenoid biosynthesis; isopentenyl diphosphate biosynthesis via DXP pathway; isopentenyl diphosphate from 1-deoxy-D-xylulose 5-phosphate: step 2/6. Its function is as follows. Catalyzes the formation of 4-diphosphocytidyl-2-C-methyl-D-erythritol from CTP and 2-C-methyl-D-erythritol 4-phosphate (MEP). This chain is 2-C-methyl-D-erythritol 4-phosphate cytidylyltransferase, found in Burkholderia cenocepacia (strain ATCC BAA-245 / DSM 16553 / LMG 16656 / NCTC 13227 / J2315 / CF5610) (Burkholderia cepacia (strain J2315)).